A 321-amino-acid polypeptide reads, in one-letter code: Endoglucanase 1 (321 aa).

Positions 1–27 are cleaved as a signal peptide; sequence MSRKLRTLMAALCALPLAFAAAPPAHA. Asp-110 is an active-site residue. Cys-112 and Cys-156 form a disulfide bridge. The active-site Proton donor is Asp-149. The active-site Nucleophile is the Asp-295.

This sequence belongs to the glycosyl hydrolase 6 (cellulase B) family.

The enzyme catalyses Endohydrolysis of (1-&gt;4)-beta-D-glucosidic linkages in cellulose, lichenin and cereal beta-D-glucans.. In terms of biological role, implicated in the mechanism of induction exerted by cellobiose. The protein is Endoglucanase 1 (celA1) of Streptomyces halstedii.